The chain runs to 261 residues: Src-like-adapter 2 (261 aa).

Residues Met-1 to Ser-10 are compositionally biased toward basic residues. Positions Met-1–Glu-31 are disordered. Gly-2 is lipidated: N-myristoyl glycine. Positions Arg-32 to His-92 constitute an SH3 domain. In terms of domain architecture, SH2 spans Trp-94–Cys-191. An SLA C-terminal region spans residues Arg-195–Ala-261.

Interacts (via SH2 domain) with ZAP70 (phosphorylated) and CD3Z (phosphorylated). Interacts (via SH2 domain) with CSF1R (phosphorylated). Interacts (via its C-terminal domain) with CBL (phosphorylated). Phosphorylated by CSF1R. In terms of tissue distribution, predominantly expressed in immune system, with highest levels in peripheral blood leukocytes. Expressed in spleen, thymus and lymph nodes. Expressed in T-cells as well as in monocytes, and at low level in B-cells. Also detected in placenta, prostate, skin, retina and colon.

It is found in the cytoplasm. Its subcellular location is the cell membrane. It localises to the cytoplasmic vesicle. In terms of biological role, adapter protein, which negatively regulates T-cell receptor (TCR) signaling. Inhibits T-cell antigen-receptor induced activation of nuclear factor of activated T-cells. May act by linking signaling proteins such as ZAP70 with CBL, leading to a CBL dependent degradation of signaling proteins. This is Src-like-adapter 2 (SLA2) from Homo sapiens (Human).